Here is a 101-residue protein sequence, read N- to C-terminus: Protein translation factor SUI1 homolog (101 aa).

It belongs to the SUI1 family.

In Aeropyrum pernix (strain ATCC 700893 / DSM 11879 / JCM 9820 / NBRC 100138 / K1), this protein is Protein translation factor SUI1 homolog.